Here is a 311-residue protein sequence, read N- to C-terminus: tRNA dimethylallyltransferase (311 aa).

9 to 16 (GPTAVGKT) is an ATP binding site. 11–16 (TAVGKT) serves as a coordination point for substrate. Positions 34–37 (DSMQ) are interaction with substrate tRNA.

The protein belongs to the IPP transferase family. Monomer. The cofactor is Mg(2+).

It carries out the reaction adenosine(37) in tRNA + dimethylallyl diphosphate = N(6)-dimethylallyladenosine(37) in tRNA + diphosphate. In terms of biological role, catalyzes the transfer of a dimethylallyl group onto the adenine at position 37 in tRNAs that read codons beginning with uridine, leading to the formation of N6-(dimethylallyl)adenosine (i(6)A). This chain is tRNA dimethylallyltransferase, found in Clostridium botulinum (strain Langeland / NCTC 10281 / Type F).